A 126-amino-acid chain; its full sequence is Fluoride-specific ion channel FluC (126 aa).

Transmembrane regions (helical) follow at residues 5 to 25 (VLAV…LGLW), 35 to 55 (WGTL…MAFF), 68 to 88 (FAVT…LEMF), and 99 to 119 (ALVG…LGFL). Positions 75 and 78 each coordinate Na(+).

This sequence belongs to the fluoride channel Fluc/FEX (TC 1.A.43) family.

It localises to the cell inner membrane. The catalysed reaction is fluoride(in) = fluoride(out). Na(+) is not transported, but it plays an essential structural role and its presence is essential for fluoride channel function. In terms of biological role, fluoride-specific ion channel. Important for reducing fluoride concentration in the cell, thus reducing its toxicity. This chain is Fluoride-specific ion channel FluC, found in Marinobacter nauticus (strain ATCC 700491 / DSM 11845 / VT8) (Marinobacter aquaeolei).